The primary structure comprises 255 residues: Imidazole glycerol phosphate synthase subunit HisF (255 aa).

Residues D12 and D131 contribute to the active site.

The protein belongs to the HisA/HisF family. In terms of assembly, heterodimer of HisH and HisF.

It localises to the cytoplasm. It carries out the reaction 5-[(5-phospho-1-deoxy-D-ribulos-1-ylimino)methylamino]-1-(5-phospho-beta-D-ribosyl)imidazole-4-carboxamide + L-glutamine = D-erythro-1-(imidazol-4-yl)glycerol 3-phosphate + 5-amino-1-(5-phospho-beta-D-ribosyl)imidazole-4-carboxamide + L-glutamate + H(+). It participates in amino-acid biosynthesis; L-histidine biosynthesis; L-histidine from 5-phospho-alpha-D-ribose 1-diphosphate: step 5/9. Functionally, IGPS catalyzes the conversion of PRFAR and glutamine to IGP, AICAR and glutamate. The HisF subunit catalyzes the cyclization activity that produces IGP and AICAR from PRFAR using the ammonia provided by the HisH subunit. The chain is Imidazole glycerol phosphate synthase subunit HisF from Salinispora tropica (strain ATCC BAA-916 / DSM 44818 / JCM 13857 / NBRC 105044 / CNB-440).